We begin with the raw amino-acid sequence, 150 residues long: D-aminoacyl-tRNA deacylase (150 aa).

The Gly-cisPro motif, important for rejection of L-amino acids signature appears at 136–137; sequence GP.

It belongs to the DTD family. As to quaternary structure, homodimer.

The protein localises to the cytoplasm. The catalysed reaction is glycyl-tRNA(Ala) + H2O = tRNA(Ala) + glycine + H(+). The enzyme catalyses a D-aminoacyl-tRNA + H2O = a tRNA + a D-alpha-amino acid + H(+). Its function is as follows. An aminoacyl-tRNA editing enzyme that deacylates mischarged D-aminoacyl-tRNAs. Also deacylates mischarged glycyl-tRNA(Ala), protecting cells against glycine mischarging by AlaRS. Acts via tRNA-based rather than protein-based catalysis; rejects L-amino acids rather than detecting D-amino acids in the active site. By recycling D-aminoacyl-tRNA to D-amino acids and free tRNA molecules, this enzyme counteracts the toxicity associated with the formation of D-aminoacyl-tRNA entities in vivo and helps enforce protein L-homochirality. In Staphylococcus carnosus (strain TM300), this protein is D-aminoacyl-tRNA deacylase.